Consider the following 231-residue polypeptide: Large ribosomal subunit protein uL1 (231 aa).

Belongs to the universal ribosomal protein uL1 family. In terms of assembly, part of the 50S ribosomal subunit.

Its function is as follows. Binds directly to 23S rRNA. The L1 stalk is quite mobile in the ribosome, and is involved in E site tRNA release. In terms of biological role, protein L1 is also a translational repressor protein, it controls the translation of the L11 operon by binding to its mRNA. This chain is Large ribosomal subunit protein uL1, found in Ralstonia pickettii (strain 12J).